We begin with the raw amino-acid sequence, 500 residues long: GTPase Der (500 aa).

2 EngA-type G domains span residues 3–166 and 211–384; these read PVVA…MEEL and IKLA…VSAT. Residues 9–16, 56–60, 118–121, 217–224, 264–268, and 329–332 contribute to the GTP site; these read GRPNVGKS, DTGGI, NKID, DTAGV, and NKWD. The KH-like domain maps to 385-469; sequence KRVGTSVLTR…PIRIQFQNSE (85 aa). The interval 481-500 is disordered; that stretch reads LSQERQRKRLVGAVKNRNKK. Basic residues predominate over residues 486 to 500; sequence QRKRLVGAVKNRNKK.

It belongs to the TRAFAC class TrmE-Era-EngA-EngB-Septin-like GTPase superfamily. EngA (Der) GTPase family. In terms of assembly, associates with the 50S ribosomal subunit.

GTPase that plays an essential role in the late steps of ribosome biogenesis. The chain is GTPase Der from Aliivibrio salmonicida (strain LFI1238) (Vibrio salmonicida (strain LFI1238)).